The following is a 337-amino-acid chain: Arylacetonitrilase (337 aa).

The region spanning 7-278 is the CN hydrolase domain; the sequence is VRVAVTQHEP…EGFVYADLDL (272 aa). The Proton acceptor role is filled by E47. K127 is an active-site residue. C162 (nucleophile) is an active-site residue. Residues 311–337 are disordered; that stretch reads QHRPEGQADNAAYGLDVPSGLVEEEGA.

This sequence belongs to the carbon-nitrogen hydrolase superfamily. Nitrilase family.

The catalysed reaction is a nitrile + 2 H2O = a carboxylate + NH4(+). The enzyme catalyses 4-chlorophenylacetonitrile + 2 H2O = 4-chlorophenylacetate + NH4(+). Nitrilase that hydrolyzes preferentially phenylacetonitrile, but also (R,S)-mandelonitrile, and 2-phenylpropionitrile. This is Arylacetonitrilase from Aspergillus niger (strain ATCC MYA-4892 / CBS 513.88 / FGSC A1513).